The primary structure comprises 834 residues: Enhancer of filamentation 1 (834 aa).

Residues Met-1–Asp-505 form a required for interaction with ITCH region. One can recognise an SH3 domain in the interval Tyr-3–Gly-65. Tyr-92, Tyr-164, Tyr-166, Tyr-177, Tyr-189, Tyr-214, and Tyr-223 each carry phosphotyrosine; by ABL1. Residues Arg-102 to Ala-229 are interacts strongly with spindle-regulatory protein D1M1. A disordered region spans residues Glu-238–Val-260. Tyr-279 carries the post-translational modification Phosphotyrosine; by ABL1. Residues Ala-291 to Ala-316 are disordered. Position 296 is a phosphoserine (Ser-296). Over residues Leu-306–Asp-315 the composition is skewed to polar residues. Tyr-317 bears the Phosphotyrosine; by ABL1 mark. Disordered regions lie at residues Pro-328–Gln-398 and Gly-560–Arg-623. Residues Thr-332–Val-344 show a composition bias toward basic and acidic residues. Positions Asn-351–Phe-834 are interacts with CTTN. Residues Asp-360 to Asp-363 carry the Caspase cleavage related site motif. The residue at position 369 (Ser-369) is a Phosphoserine. Residues Ser-369–Ser-395 show a composition bias toward low complexity. Residues Phe-710 to Gly-760 are divergent helix-loop-helix motif. Residues Phe-710 to Phe-834 are required for interaction with PLK1. Ser-780 is modified (phosphoserine; by CSNK1D and CSNK1E). At Thr-804 the chain carries Phosphothreonine; by CSNK1E.

It belongs to the CAS family. Homodimer. Forms heterodimers with BCAR1/p130cas. Forms complexes with PTK2B/RAFTK, adapter protein CRKL and LYN kinase. Part of a complex composed of NEDD9, AURKA and CTTN; within the complex NEDD9 acts as a scaffold protein and is required for complex formation. Part of a ternary complex composed of SMAD3, ITCH/AIP4 and NEDD9/HEF1; within the complex NEDD9/HEF1 interacts (via N-terminus) with ITCH/AIP4 (via WW domains); the complex mediates ubiquitination and proteasomal degradation of NEDD9/HEF1. Interacts with SMAD3; the interaction promotes NEDD9 ubiquitination and proteasomal degradation. Interacts with ID2. Interacts with CTTN (via N-terminus). Interacts with MICAL. Interacts with TXNL4/DIM1. Interacts with BCAR3 (via Ras-GEF domain). Interacts with SH2D3C isoform 1 and isoform 2. Interacts with ECT2. Interacts with PTPN11/SHP-2 (via SH2 domains); the interaction is enhanced when NEDD9/CAS-L is tyrosine phosphorylated. Interacts (via C-terminus) with PLK1 (via polo box domains). Interacts with NKX2-5. Interacts with SMAD3; the interaction is inhibited by oxidation of NEDD9. Interacts with NEDD9/HEF1; interaction is induced by CXCL12 promotion of ABL-mediated phosphorylation of NEDD9/HEF1. Interacts (via SH3 domain) with PTK2/FAK. Interacts with FYN; in the presence of PTK2. Interacts with INPPL1/SHIP2. In terms of processing, cell cycle-regulated processing produces four isoforms: p115, p105, p65, and p55. Isoform p115 arises from p105 phosphorylation and appears later in the cell cycle. Isoform p55 arises from p105 as a result of cleavage at a caspase cleavage-related site and it appears specifically at mitosis. The p65 isoform is poorly detected. Post-translationally, polyubiquitinated by ITCH/AIP4, leading to proteasomal degradation. PTK2/FAK1 phosphorylates the protein at the YDYVHL motif (conserved among all cas proteins) following integrin stimulation. The SRC family kinases (FYN, SRC, LCK and CRK) are recruited to the phosphorylated sites and can phosphorylate other tyrosine residues. Ligation of either integrin beta-1 or B-cell antigen receptor on tonsillar B-cells and B-cell lines promotes tyrosine phosphorylation and both integrin and BCR-mediated tyrosine phosphorylation requires an intact actin network. Phosphorylation is required to recruit NEDD9 to T-cell receptor microclusters at the periphery of newly formed immunological synapses. In fibroblasts transformation with oncogene v-ABL results in an increase in tyrosine phosphorylation. Transiently phosphorylated following CD3 cross-linking and this phosphorylated form binds to CRKL and C3G. A mutant lacking the SH3 domain is phosphorylated upon CD3 cross-linking but not upon integrin beta-1 cross-linking. Tyrosine phosphorylation occurs upon stimulation of the G-protein coupled C1a calcitonin receptor. Calcitonin-stimulated tyrosine phosphorylation is mediated by calcium- and protein kinase C-dependent mechanisms and requires the integrity of the actin cytoskeleton. Phosphorylation at Ser-369 induces proteasomal degradation. Phosphorylated by LYN. Phosphorylation at Ser-780 by CSNK1D or CSNK1E, or phosphorylation of Thr-804 by CSNK1E enhances the interaction of NEDD9 with PLK1. Expressed in B-cells (at protein level). Expressed in the respiratory epithelium of the main bronchi to the bronchioles in the lungs (at protein level). High levels detected in kidney, lung, and placenta. Expressed in lymphocytes.

The protein resides in the cytoplasm. Its subcellular location is the cell cortex. It localises to the nucleus. It is found in the golgi apparatus. The protein localises to the cell projection. The protein resides in the lamellipodium. Its subcellular location is the cell junction. It localises to the focal adhesion. It is found in the cytoskeleton. The protein localises to the spindle pole. The protein resides in the cilium. Its subcellular location is the cilium basal body. It localises to the basolateral cell membrane. It is found in the spindle. Its function is as follows. Scaffolding protein which plays a central coordinating role for tyrosine-kinase-based signaling related to cell adhesion. As a focal adhesion protein, plays a role in embryonic fibroblast migration. May play an important role in integrin beta-1 or B cell antigen receptor (BCR) mediated signaling in B- and T-cells. Integrin beta-1 stimulation leads to recruitment of various proteins including CRKL and SHPTP2 to the tyrosine phosphorylated form. Promotes adhesion and migration of lymphocytes; as a result required for the correct migration of lymphocytes to the spleen and other secondary lymphoid organs. Plays a role in the organization of T-cell F-actin cortical cytoskeleton and the centralization of T-cell receptor microclusters at the immunological synapse. Negatively regulates cilia outgrowth in polarized cysts. Modulates cilia disassembly via activation of AURKA-mediated phosphorylation of HDAC6 and subsequent deacetylation of alpha-tubulin. Positively regulates RANKL-induced osteoclastogenesis. Required for the maintenance of hippocampal dendritic spines in the dentate gyrus and CA1 regions, thereby involved in spatial learning and memory. In Homo sapiens (Human), this protein is Enhancer of filamentation 1.